A 506-amino-acid polypeptide reads, in one-letter code: CDK5 regulatory subunit-associated protein 3 (506 aa).

3 consecutive short sequence motifs (shuffled ATG8-binding motif) follow at residues 267–270 (IDWG), 292–295 (IDWG), and 310–313 (IDWG). Residues 269 to 506 (WGDFGVEAVS…RPVNLMGTSL (238 aa)) are required for interaction with UFL1 and mediates interaction with CHEK1. Positions 355 to 370 (DELMELEIFLARRAVE) are RPL10a-binding domain (RBD). Residue K450 forms a Glycyl lysine isopeptide (Lys-Gly) (interchain with G-Cter in SUMO2) linkage.

Belongs to the CDK5RAP3 family. As to quaternary structure, substrate adapter component of the UFM1 ribosome E3 ligase (UREL) complex, composed of UFL1, DDRGK1 and CDK5RAP3. Interaction with UFL1 anchors CDK5RAP3 in the cytoplasm, preventing its translocation to the nucleus which allows expression of the CCND1 cyclin and progression of cells through the G1/S transition. Interacts with ATG8 family proteins MAP1LC3A, MAP1LC3B, GABARAP, GABARAPL1 and GABARAPL2. Interacts with CDK5R1; competes with CDK5RAP1 and CDK5RAP2. Interacts with RELA. Interacts with CHEK1; may negatively regulate CHEK1 and thereby stimulate entry into mitosis. Interacts with CDKN2A/ARF and MDM2; forms a ternary complex involved in regulation of p53/TP53. Interacts with MAPK14. Interacts with CCNB1. Interacts with TUBG1; may regulate CDK5RAP3 in mitotic G2/M transition checkpoint. Post-translationally, may be phosphorylated by CDK5. Ubiquitinated. Probably triggers proteasomal degradation and is negatively regulated by UFL1. In terms of processing, may be ufmylated. Post-translationally, cleaved by caspases early during apoptosis, the resulting peptides may play a role in rupture of the nuclear envelope.

The protein resides in the endoplasmic reticulum membrane. Its subcellular location is the cytoplasm. The protein localises to the nucleus. It localises to the cytoskeleton. It is found in the microtubule organizing center. The protein resides in the centrosome. Substrate adapter of E3 ligase complexes mediating ufmylation, the covalent attachment of the ubiquitin-like modifier UFM1 to substrate proteins, and which is involved in various processes, such as ribosome recycling and reticulophagy (also called ER-phagy). As part of the UREL complex, plays a key role in ribosome recycling by promoting mono-ufmylation of RPL26/uL24 subunit of the 60S ribosome. Ufmylation of RPL26/uL24 occurs on free 60S ribosomes following ribosome dissociation: it weakens the junction between post-termination 60S subunits and SEC61 translocons, promoting release and recycling of the large ribosomal subunit from the endoplasmic reticulum membrane. Ufmylation of RPL26/uL24 and subsequent 60S ribosome recycling either take place after normal termination of translation or after ribosome stalling during cotranslational translocation at the endoplasmic reticulum. Within the UREL complex, CDK5RAP3 acts as a substrate adapter that constrains UFL1 ligase activity to mono-ufmylate RPL26/uL24 at 'Lys-134'. The UREL complex is also involved in reticulophagy in response to endoplasmic reticulum stress by promoting ufmylation of proteins such as CYB5R3, thereby promoting lysosomal degradation of ufmylated proteins. Also acts as a regulator of transcription: negatively regulates NF-kappa-B-mediated gene transcription through the control of RELA phosphorylation. Also regulates mitotic G2/M transition checkpoint and mitotic G2 DNA damage checkpoint. Through its interaction with CDKN2A/ARF and MDM2 may induce MDM2-dependent p53/TP53 ubiquitination, stabilization and activation in the nucleus, thereby promoting G1 cell cycle arrest and inhibition of cell proliferation. May also play a role in the rupture of the nuclear envelope during apoptosis. May regulate MAPK14 activity by regulating its dephosphorylation by PPM1D/WIP1. Required for liver development. The protein is CDK5 regulatory subunit-associated protein 3 of Pongo abelii (Sumatran orangutan).